Consider the following 425-residue polypeptide: MHDIEYIRQNSEEFEKAMESRGMKEFSAEEILKVDHKKRLLTTKLQDLNRQRNEITKKIKELKMSKSPCEKQIKSSKNITNEIEAISLKEQMEKDKLVNILSNLPNIPVQGVPIGAGENSNLEVRRYREKRQFDFVPKSHYELGERLGLMDFEQAAKISGSRFAILKGQLAKLGRALINFMLEMHVNEFGYTEVYHPVLVKNEAMYNVGQLPKFSDDSYLTTDELRLIPTGEVVLTNSVADKIVEEKKLPIRFTAYSECFRKEAGSAGQSTRGMIRQHQFGKVELVSITTEDQSNDELERMTGVAEEILKRLELPYRVILLCSGDMGFAAQKTYDIEVWLPEQNRYREISSCSNCGNFQARRMNAKYSLEANKKVKKYVHTLNGSALAIGRTIIAVMENYQNPDGSITIPNVLQKYISNGTVISK.

Position 230 to 232 (230 to 232 (TGE)) interacts with L-serine. Position 261 to 263 (261 to 263 (RKE)) interacts with ATP. An L-serine-binding site is contributed by glutamate 284. Position 348–351 (348–351 (EISS)) interacts with ATP. Position 385 (serine 385) interacts with L-serine.

The protein belongs to the class-II aminoacyl-tRNA synthetase family. Type-1 seryl-tRNA synthetase subfamily. In terms of assembly, homodimer. The tRNA molecule binds across the dimer.

Its subcellular location is the cytoplasm. It carries out the reaction tRNA(Ser) + L-serine + ATP = L-seryl-tRNA(Ser) + AMP + diphosphate + H(+). The catalysed reaction is tRNA(Sec) + L-serine + ATP = L-seryl-tRNA(Sec) + AMP + diphosphate + H(+). It participates in aminoacyl-tRNA biosynthesis; selenocysteinyl-tRNA(Sec) biosynthesis; L-seryl-tRNA(Sec) from L-serine and tRNA(Sec): step 1/1. In terms of biological role, catalyzes the attachment of serine to tRNA(Ser). Is also able to aminoacylate tRNA(Sec) with serine, to form the misacylated tRNA L-seryl-tRNA(Sec), which will be further converted into selenocysteinyl-tRNA(Sec). This chain is Serine--tRNA ligase, found in Wolbachia sp. subsp. Brugia malayi (strain TRS).